A 479-amino-acid polypeptide reads, in one-letter code: MSPQTETKAGVGFQAGVKDYKLTYYTPEYETKDTDILAAFRVSPQPGVPPEEAGAAVAAESSTGTWTTVWTDGLTSLDRYKGRCYHIEPVAGEDSQWICYVAYPLDLFEEGSVTNMFTSIVGNVFGFKALRALRLEDLRIPPTYSKTFQGPPHGIQVERDKLNKYGRPLLGCTIKPKLGLSAKNYGRACYECLRGGLDFTKDDENVNSQPFMRWRDRFVFCAEAIYKSQAETGEIKGHYLNATAGTCEEMIKRAVFARELGVPIVMHDYLTGGFTANTTLAHYCRDNGLLLHIHRAMHAVIDRQKNHGMHFRVLAKALRMSGGDHIHSGTVVGKLEGEREMTLGFVDLLRDDFIEKDRARGIFFTQDWVSMPGVIPVASGGIHVWHMPALTEIFGDDSVLQFGGGTLGHPWGNAPGAAANRVALEACVQARNEGRDLAREGNEIIRAACKWSPELAAACEVWKAIKFEFEPVDTIDKKV.

The propeptide occupies 1–2 (MS). The residue at position 3 (Pro-3) is an N-acetylproline. Residues Asn-123 and Thr-173 each contribute to the substrate site. Lys-175 (proton acceptor) is an active-site residue. Lys-177 contacts substrate. Mg(2+) contacts are provided by Lys-201, Asp-203, and Glu-204. Lys-201 carries the N6-carboxylysine modification. The active-site Proton acceptor is His-294. Residues Arg-295, His-327, and Ser-379 each coordinate substrate.

This sequence belongs to the RuBisCO large chain family. Type I subfamily. Heterohexadecamer of 8 large chains and 8 small chains; disulfide-linked. The disulfide link is formed within the large subunit homodimers. The cofactor is Mg(2+). The disulfide bond which can form in the large chain dimeric partners within the hexadecamer appears to be associated with oxidative stress and protein turnover.

The protein localises to the plastid. It is found in the chloroplast. It catalyses the reaction 2 (2R)-3-phosphoglycerate + 2 H(+) = D-ribulose 1,5-bisphosphate + CO2 + H2O. The catalysed reaction is D-ribulose 1,5-bisphosphate + O2 = 2-phosphoglycolate + (2R)-3-phosphoglycerate + 2 H(+). In terms of biological role, ruBisCO catalyzes two reactions: the carboxylation of D-ribulose 1,5-bisphosphate, the primary event in carbon dioxide fixation, as well as the oxidative fragmentation of the pentose substrate in the photorespiration process. Both reactions occur simultaneously and in competition at the same active site. This is Ribulose bisphosphate carboxylase large chain from Hordeum vulgare (Barley).